The sequence spans 479 residues: Chromosomal replication initiator protein DnaA (479 aa).

The segment at 1-71 (MNLTQIWKAT…RNALARVVGY (71 aa)) is domain I, interacts with DnaA modulators. Residues 71–138 (YPVQVQVLIA…LDLASAMRSG (68 aa)) form a domain II region. The segment covering 86 to 99 (TEPSPSLTLSNGSR) has biased composition (polar residues). The segment at 86 to 106 (TEPSPSLTLSNGSRLMSDPEP) is disordered. Residues 139 to 355 (MLNPRYTFSS…GSLNRVAAYA (217 aa)) are domain III, AAA+ region. ATP-binding residues include Gly183, Gly185, Lys186, and Thr187. The tract at residues 356–479 (ELNRAPITIE…IRERIQMLRG (124 aa)) is domain IV, binds dsDNA.

The protein belongs to the DnaA family. Oligomerizes as a right-handed, spiral filament on DNA at oriC.

It localises to the cytoplasm. Plays an essential role in the initiation and regulation of chromosomal replication. ATP-DnaA binds to the origin of replication (oriC) to initiate formation of the DNA replication initiation complex once per cell cycle. Binds the DnaA box (a 9 base pair repeat at the origin) and separates the double-stranded (ds)DNA. Forms a right-handed helical filament on oriC DNA; dsDNA binds to the exterior of the filament while single-stranded (ss)DNA is stabiized in the filament's interior. The ATP-DnaA-oriC complex binds and stabilizes one strand of the AT-rich DNA unwinding element (DUE), permitting loading of DNA polymerase. After initiation quickly degrades to an ADP-DnaA complex that is not apt for DNA replication. Binds acidic phospholipids. This chain is Chromosomal replication initiator protein DnaA, found in Chloroflexus aurantiacus (strain ATCC 29366 / DSM 635 / J-10-fl).